The sequence spans 265 residues: GTP cyclohydrolase FolE2 (265 aa).

The protein belongs to the GTP cyclohydrolase IV family.

It catalyses the reaction GTP + H2O = 7,8-dihydroneopterin 3'-triphosphate + formate + H(+). It functions in the pathway cofactor biosynthesis; 7,8-dihydroneopterin triphosphate biosynthesis; 7,8-dihydroneopterin triphosphate from GTP: step 1/1. Functionally, converts GTP to 7,8-dihydroneopterin triphosphate. In Bordetella avium (strain 197N), this protein is GTP cyclohydrolase FolE2.